The chain runs to 1024 residues: Unconventional myosin-Ig (1024 aa).

The 699-residue stretch at 15 to 713 (YGKPDFVLLD…TLVTLEQSRA (699 aa)) folds into the Myosin motor domain. 108 to 115 (GESGAGKT) serves as a coordination point for ATP. Residues 590–612 (MVALVENLASKEPFYVRCIKPNE) form an actin-binding region. The IQ domain occupies 716-745 (IPIIVLLLQKAWRGTLARWHCRRLRAIYTI). In terms of domain architecture, TH1 spans 830-1023 (GLRQDWGCQR…RSTFTLLWPS (194 aa)). The interval 999–1024 (VEPRPEQPEPDFQSSRSTFTLLWPSH) is disordered.

This sequence belongs to the TRAFAC class myosin-kinesin ATPase superfamily. Myosin family. As to quaternary structure, interacts with calmodulin; via its IQ motifs. In terms of tissue distribution, specifically expressed in hematopoietic cells. Detected in adult tissues of the immune system such as thymus, lymph nodes and spleen, but not in brain, lung, heart, liver, small intestine, testis and kidney (at protein level). Highly expressed in T-lymphocytes; constitutes the most highly expressed class I myosin in naive CD4 and CD8 T-cells. Also present in B-lymphocytes.

Its subcellular location is the cell membrane. It localises to the cell projection. The protein localises to the phagocytic cup. In terms of biological role, unconventional myosin required during immune response for detection of rare antigen-presenting cells by regulating T-cell migration. Unconventional myosins are actin-based motor molecules with ATPase activity and serve in intracellular movements. Acts as a regulator of T-cell migration by generating membrane tension, enforcing cell-intrinsic meandering search, thereby enhancing detection of rare antigens during lymph-node surveillance, enabling pathogen eradication. Also required in B-cells, where it regulates different membrane/cytoskeleton-dependent processes. Involved in Fc-gamma receptor (Fc-gamma-R) phagocytosis. The polypeptide is Unconventional myosin-Ig (Myo1g) (Mus musculus (Mouse)).